The sequence spans 177 residues: Putative adenylate kinase (177 aa).

5 residues coordinate ATP: glycine 10, glycine 12, lysine 13, threonine 14, and threonine 15. Residues 30–53 (DITEAVKKYKLYTEKDEDMDSYVI) form an NMP region. Positions 103–113 (KRGYKPKKVLE) are LID. Arginine 104 is an ATP binding site.

The protein belongs to the adenylate kinase family. AK6 subfamily. As to quaternary structure, interacts with uS11. Not a structural component of 40S pre-ribosomes, but transiently interacts with them by binding to uS11.

It catalyses the reaction AMP + ATP = 2 ADP. The catalysed reaction is ATP + H2O = ADP + phosphate + H(+). Broad-specificity nucleoside monophosphate (NMP) kinase that catalyzes the reversible transfer of the terminal phosphate group between nucleoside triphosphates and monophosphates. Also has ATPase activity. Involved in the late maturation steps of the 30S ribosomal particles, specifically 16S rRNA maturation. While NMP activity is not required for ribosome maturation, ATPase activity is. Associates transiently with small ribosomal subunit protein uS11. ATP hydrolysis breaks the interaction with uS11. May temporarily remove uS11 from the ribosome to enable a conformational change of the ribosomal RNA that is needed for the final maturation step of the small ribosomal subunit. This chain is Putative adenylate kinase, found in Methanocaldococcus jannaschii (strain ATCC 43067 / DSM 2661 / JAL-1 / JCM 10045 / NBRC 100440) (Methanococcus jannaschii).